The sequence spans 155 residues: Endoribonuclease YbeY (155 aa).

Residues His-114, His-118, and His-124 each coordinate Zn(2+).

The protein belongs to the endoribonuclease YbeY family. Zn(2+) serves as cofactor.

The protein localises to the cytoplasm. Functionally, single strand-specific metallo-endoribonuclease involved in late-stage 70S ribosome quality control and in maturation of the 3' terminus of the 16S rRNA. The chain is Endoribonuclease YbeY from Proteus mirabilis (strain HI4320).